Consider the following 854-residue polypeptide: Translation initiation factor IF-2 (854 aa).

A compositionally biased stretch (basic residues) spans 61–72; that stretch reads KNIKTPTAKKPK. Disordered regions lie at residues 61 to 115 and 167 to 186; these read KNIK…LASA and ESLK…KKES. The segment covering 73–108 has biased composition (basic and acidic residues); sequence KENAKDQEKLNESEKKEPKKEESKEQEKQEIIDTHK. Positions 353-520 constitute a tr-type G domain; that stretch reads TRAPVITIMG…IVLLQADILE (168 aa). Residues 362-369 form a G1 region; that stretch reads GHVDHGKT. GTP is bound at residue 362–369; that stretch reads GHVDHGKT. Positions 387-391 are G2; sequence GITQH. Residues 408–411 form a G3 region; that stretch reads DTPG. Residues 408–412 and 462–465 contribute to the GTP site; these read DTPGH and NKMD. The tract at residues 462–465 is G4; it reads NKMD. A G5 region spans residues 498-500; sequence SAK.

Belongs to the TRAFAC class translation factor GTPase superfamily. Classic translation factor GTPase family. IF-2 subfamily.

It is found in the cytoplasm. In terms of biological role, one of the essential components for the initiation of protein synthesis. Protects formylmethionyl-tRNA from spontaneous hydrolysis and promotes its binding to the 30S ribosomal subunits. Also involved in the hydrolysis of GTP during the formation of the 70S ribosomal complex. The sequence is that of Translation initiation factor IF-2 from Campylobacter jejuni subsp. doylei (strain ATCC BAA-1458 / RM4099 / 269.97).